Consider the following 239-residue polypeptide: tRNA (guanine-N(1)-)-methyltransferase (239 aa).

S-adenosyl-L-methionine is bound by residues Gly108 and 127–132; that span reads LGDYVL.

This sequence belongs to the RNA methyltransferase TrmD family. Homodimer.

The protein resides in the cytoplasm. It carries out the reaction guanosine(37) in tRNA + S-adenosyl-L-methionine = N(1)-methylguanosine(37) in tRNA + S-adenosyl-L-homocysteine + H(+). In terms of biological role, specifically methylates guanosine-37 in various tRNAs. The sequence is that of tRNA (guanine-N(1)-)-methyltransferase from Streptococcus pneumoniae (strain P1031).